The primary structure comprises 95 residues: uncharacterized protein (95 aa).

Residues 45–65 (WLSGLAFVLQAALVMPVVLAF) form a helical membrane-spanning segment.

The protein resides in the membrane. This is an uncharacterized protein from Mycobacterium leprae (strain TN).